The primary structure comprises 103 residues: Large ribosomal subunit protein bL21 (103 aa).

The protein belongs to the bacterial ribosomal protein bL21 family. In terms of assembly, part of the 50S ribosomal subunit. Contacts protein L20.

Its function is as follows. This protein binds to 23S rRNA in the presence of protein L20. The protein is Large ribosomal subunit protein bL21 of Vesicomyosocius okutanii subsp. Calyptogena okutanii (strain HA).